A 412-amino-acid polypeptide reads, in one-letter code: Argininosuccinate synthase (412 aa).

Residues Ala-20–Ser-28 and Ala-48 each bind ATP. L-citrulline is bound by residues Tyr-100 and Ser-105. Gly-130 is an ATP binding site. L-aspartate contacts are provided by Thr-132, Asn-136, and Asp-137. An L-citrulline-binding site is contributed by Asn-136. L-citrulline contacts are provided by Arg-140, Ser-189, Ser-198, Glu-274, and Tyr-286.

This sequence belongs to the argininosuccinate synthase family. Type 1 subfamily. Homotetramer.

Its subcellular location is the cytoplasm. The enzyme catalyses L-citrulline + L-aspartate + ATP = 2-(N(omega)-L-arginino)succinate + AMP + diphosphate + H(+). It functions in the pathway amino-acid biosynthesis; L-arginine biosynthesis; L-arginine from L-ornithine and carbamoyl phosphate: step 2/3. The polypeptide is Argininosuccinate synthase (Shewanella pealeana (strain ATCC 700345 / ANG-SQ1)).